The sequence spans 334 residues: tRNA dimethylallyltransferase (334 aa).

22–29 lines the ATP pocket; the sequence is GPTASGKT. 24-29 lines the substrate pocket; the sequence is TASGKT.

The protein belongs to the IPP transferase family. As to quaternary structure, monomer. It depends on Mg(2+) as a cofactor.

It carries out the reaction adenosine(37) in tRNA + dimethylallyl diphosphate = N(6)-dimethylallyladenosine(37) in tRNA + diphosphate. Catalyzes the transfer of a dimethylallyl group onto the adenine at position 37 in tRNAs that read codons beginning with uridine, leading to the formation of N6-(dimethylallyl)adenosine (i(6)A). The polypeptide is tRNA dimethylallyltransferase (Rhodopirellula baltica (strain DSM 10527 / NCIMB 13988 / SH1)).